Reading from the N-terminus, the 368-residue chain is G-protein coupled receptor 62 (368 aa).

Residues 1 to 18 (MANSTGLNASEVAGSLGL) lie on the Extracellular side of the membrane. N-linked (GlcNAc...) asparagine glycans are attached at residues Asn3 and Asn8. A helical membrane pass occupies residues 19–39 (ILAAVVEVGALLGNGALLVVV). The Cytoplasmic segment spans residues 40 to 53 (LRTPGLRDALYLAH). The helical transmembrane segment at 54–74 (LCVVDLLAAASIMPLGLLAAP) threads the bilayer. At 75–91 (PPGLGRVRLGPAPCRAA) the chain is on the extracellular side. A helical transmembrane segment spans residues 92 to 112 (RFLSAALLPACTLGVAALGLA). The Cytoplasmic segment spans residues 113–129 (RYRLIVHPLRPGSRPPP). The helical transmembrane segment at 130–150 (VLVLTAVWAAAGLLGALSLLG) threads the bilayer. Topologically, residues 151–177 (TPPAPPPAPARCSVLAGGLGPFRPLWA) are extracellular. Residues 178 to 198 (LLAFALPALLLLGAYGGIFVV) traverse the membrane as a helical segment. Topologically, residues 199-239 (ARRAALRPPRPARGSRLHSDSLDSRLSILPPLRPRLPGGKA) are cytoplasmic. A helical membrane pass occupies residues 240–260 (ALAPALAVGQFAACWLPYGCA). Over 261–272 (CLAPAARAAEAE) the chain is Extracellular. The helical transmembrane segment at 273–293 (AAVTWVAYSAFAAHPFLYGLL) threads the bilayer. Over 294-368 (QRPVRLALGR…YQGPPESSLS (75 aa)) the chain is Cytoplasmic. A disordered region spans residues 332–368 (RPPEGPAVGPSEAPEQTPELAGGRSPAYQGPPESSLS).

The protein belongs to the G-protein coupled receptor 1 family. As to quaternary structure, homodimers. Forms heterodimer with MTNR1B. Interacts with ARRB1 and ARRB2 in a spontaneous and agonist-independent manner; leading to the internalization of GPR62 in the endosomal compartment. Expressed in brain; detected in the basal forebrain, frontal cortex, caudate, putamen, thalamus and hippocampus.

Its subcellular location is the cell membrane. The protein resides in the endosome membrane. Functionally, orphan G-protein coupled receptor. Constitutively activates the G(q/11)/inositol phosphate and the G(s)-alpha/cAMP signaling pathways. Has spontaneous activity for beta-arrestin recruitment. Shows a reciprocal modulation of signaling functions with the melatonin receptor MTNR1B most likely through receptor heteromerization. In Homo sapiens (Human), this protein is G-protein coupled receptor 62 (GPR62).